An 816-amino-acid polypeptide reads, in one-letter code: Microbial collagenase (816 aa).

A signal peptide spans 1–27 (MSHIRFFPRHRLALACMLASVSSFSFA). Residue His435 participates in Zn(2+) binding. The active site involves Glu436. His439 provides a ligand contact to Zn(2+).

Belongs to the peptidase M9A family. Requires Zn(2+) as cofactor.

Its subcellular location is the secreted. The catalysed reaction is Digestion of native collagen in the triple helical region at Xaa-|-Gly bonds. With synthetic peptides, a preference is shown for Gly at P3 and P1', Pro and Ala at P2 and P2', and hydroxyproline, Ala or Arg at P3'.. Possesses gelatinolytic activity. Can cause weak haemolysis on blood agar. This is Microbial collagenase (prt) from Vibrio parahaemolyticus serotype O3:K6 (strain RIMD 2210633).